Consider the following 202-residue polypeptide: Indolepyruvate oxidoreductase subunit IorB (202 aa).

Heterodimer of the IorA and IorB subunits.

It catalyses the reaction indole-3-pyruvate + 2 oxidized [2Fe-2S]-[ferredoxin] + CoA = (indol-3-yl)acetyl-CoA + 2 reduced [2Fe-2S]-[ferredoxin] + CO2 + H(+). In terms of biological role, catalyzes the ferredoxin-dependent oxidative decarboxylation of arylpyruvates. The polypeptide is Indolepyruvate oxidoreductase subunit IorB (iorB) (Pyrococcus horikoshii (strain ATCC 700860 / DSM 12428 / JCM 9974 / NBRC 100139 / OT-3)).